Consider the following 249-residue polypeptide: Probable endopeptidase YafL (249 aa).

The first 17 residues, 1-17, serve as a signal peptide directing secretion; the sequence is MSLPSIPSFVLSGLLLI. The N-palmitoyl cysteine moiety is linked to residue Cys18. Cys18 carries S-diacylglycerol cysteine lipidation. Residues 116–243 form the NlpC/P60 domain; sequence HNITEVAIHR…DHFLGARRIL (128 aa). Cys147 functions as the Nucleophile in the catalytic mechanism. His202 serves as the catalytic Proton acceptor. Residue Glu214 is part of the active site.

It belongs to the peptidase C40 family.

Its subcellular location is the cell membrane. The chain is Probable endopeptidase YafL (yafL) from Escherichia coli (strain K12).